The primary structure comprises 237 residues: F-box only protein 50 (237 aa).

Residues 31–231 (VFETKPFERN…VTDSSVIVKA (201 aa)) enclose the FBA domain. Residues 40–82 (NLLQNPSPYGVNHTVPPPEPHRSGIPPPSDRPPQLEPEGNFSG) form a disordered region. Positions 64 to 74 (IPPPSDRPPQL) are enriched in pro residues.

As to expression, expressed in nonspecific cytotoxic cells (NCC).

It localises to the cytoplasm. Functionally, may promote cell proliferation. The protein is F-box only protein 50 (nccrp1) of Danio rerio (Zebrafish).